Consider the following 224-residue polypeptide: ATP-dependent dethiobiotin synthetase BioD (224 aa).

13–18 serves as a coordination point for ATP; it reads NVGKTI. Thr-17 is a binding site for Mg(2+). Lys-38 is an active-site residue. Ser-42 lines the substrate pocket. ATP is bound by residues Asp-55, 116 to 119, 176 to 177, and Asn-211; these read EGAG and NN. Mg(2+) is bound by residues Asp-55 and Glu-116.

The protein belongs to the dethiobiotin synthetase family. Homodimer. Mg(2+) is required as a cofactor.

It is found in the cytoplasm. The enzyme catalyses (7R,8S)-7,8-diammoniononanoate + CO2 + ATP = (4R,5S)-dethiobiotin + ADP + phosphate + 3 H(+). Its pathway is cofactor biosynthesis; biotin biosynthesis; biotin from 7,8-diaminononanoate: step 1/2. Catalyzes a mechanistically unusual reaction, the ATP-dependent insertion of CO2 between the N7 and N8 nitrogen atoms of 7,8-diaminopelargonic acid (DAPA, also called 7,8-diammoniononanoate) to form a ureido ring. This chain is ATP-dependent dethiobiotin synthetase BioD, found in Buchnera aphidicola subsp. Acyrthosiphon pisum (strain APS) (Acyrthosiphon pisum symbiotic bacterium).